Reading from the N-terminus, the 505-residue chain is Transcription factor VHR2 (505 aa).

Residues methionine 1 to histidine 16 show a composition bias toward basic and acidic residues. 3 disordered regions span residues methionine 1–glycine 23, asparagine 105–proline 179, and glutamine 421–alanine 460. Residues proline 133–serine 148 show a composition bias toward low complexity. The span at glutamine 421–alanine 443 shows a compositional bias: polar residues.

This sequence belongs to the VHR1 family.

Its subcellular location is the nucleus. Its function is as follows. Transcription factor that regulates ERG9, but seems to have a more global function in transcription. The protein is Transcription factor VHR2 (VHR2) of Saccharomyces cerevisiae (strain ATCC 204508 / S288c) (Baker's yeast).